Here is a 202-residue protein sequence, read N- to C-terminus: Small ribosomal subunit protein uS4 (202 aa).

Residues 93–155 (RRLDNVVRRV…ENLKNLYRGV (63 aa)) enclose the S4 RNA-binding domain.

It belongs to the universal ribosomal protein uS4 family. As to quaternary structure, part of the 30S ribosomal subunit. Contacts protein S5. The interaction surface between S4 and S5 is involved in control of translational fidelity.

One of the primary rRNA binding proteins, it binds directly to 16S rRNA where it nucleates assembly of the body of the 30S subunit. Functionally, with S5 and S12 plays an important role in translational accuracy. The chain is Small ribosomal subunit protein uS4 from Rhodopirellula baltica (strain DSM 10527 / NCIMB 13988 / SH1).